A 358-amino-acid chain; its full sequence is Dynein axonemal assembly factor 10 (358 aa).

6 WD repeats span residues 64-106 (EKPK…TPVY), 116-155 (NCID…TPVA), 163-206 (EAKR…VRWE), 208-250 (NIKN…PTKG), 258-298 (AHKS…QRSR), and 320-358 (LSTQ…LNRL).

Interacts with PIH1D1; the interaction associates DNAAF10 with the R2TP complex. Interacts with several dynein axonemal assembly factors.

It localises to the dynein axonemal particle. Functionally, key assembly factor specifically required for the stability of axonemal dynein heavy chains in cytoplasm. The polypeptide is Dynein axonemal assembly factor 10 (dnaaf10) (Xenopus laevis (African clawed frog)).